Here is a 205-residue protein sequence, read N- to C-terminus: Iron-sulfur assembly protein 2 (205 aa).

Cys131, Cys196, and Cys198 together coordinate Fe cation.

This sequence belongs to the HesB/IscA family.

The protein resides in the mitochondrion matrix. Involved in the assembly of mitochondrial and cytoplasmic iron-sulfur proteins. Probably involved in the binding of an intermediate of Fe/S cluster assembly. The sequence is that of Iron-sulfur assembly protein 2 (isa2) from Schizosaccharomyces pombe (strain 972 / ATCC 24843) (Fission yeast).